The sequence spans 90 residues: Small ribosomal subunit protein bS18 (90 aa).

This sequence belongs to the bacterial ribosomal protein bS18 family. Part of the 30S ribosomal subunit. Forms a tight heterodimer with protein bS6.

In terms of biological role, binds as a heterodimer with protein bS6 to the central domain of the 16S rRNA, where it helps stabilize the platform of the 30S subunit. The polypeptide is Small ribosomal subunit protein bS18 (Polynucleobacter asymbioticus (strain DSM 18221 / CIP 109841 / QLW-P1DMWA-1) (Polynucleobacter necessarius subsp. asymbioticus)).